The following is a 428-amino-acid chain: Keratin, type I cytoskeletal 18-A (428 aa).

Residues 2 to 78 (SFRSQTSSTT…SVKGSGLFNN (77 aa)) are head. The interval 79 to 114 (EKETMQILNDRLASYLETVRNLEQANSKLELQIRET) is coil 1A. The IF rod domain maps to 79–390 (EKETMQILND…RLLDGEDFRL (312 aa)). The tract at residues 115–131 (LEKRGPTTQDYSAYEKV) is linker 1. Positions 132–223 (VEDLKSQIYD…RSHQTDVEEL (92 aa)) are coil 1B. A linker 12 region spans residues 224 to 247 (RKHISECGVQVDVDAPKGQDLSKI). The interval 248-385 (MEEIRAQYET…IATYRRLLDG (138 aa)) is coil 2. The interval 386–428 (EDFRLQDALAVQTTKVQKKITVTETVVDGKVVSQSSEVQEIKK) is tail.

The protein belongs to the intermediate filament family. In terms of assembly, heterotetramer of two type I and two type II keratins. Keratin-18 associates with keratin-8. In terms of processing, phosphorylated. Proteolytically cleaved by caspases during epithelial cell apoptosis.

Its function is as follows. When phosphorylated, plays a role in filament reorganization. The protein is Keratin, type I cytoskeletal 18-A of Polypterus senegalus (Senegal bichir).